Reading from the N-terminus, the 379-residue chain is MAKKTKKAEEITKKFGDERRKALDDALKNIEKDFGKGAVMRLGERAEQKVQVMSSGSLALDIALGAGGYPKGRIVEIYGPESSGKTTVALHAVAQAQKEGGIAAFIDAEHALDPAYAAALGVNIDELLLSQPDSGEQGLEIAGKLIDSGAVDLVVVDSVAALVPRAEIDGDIGDSHVGLQARMMSQAMRKLSASINKTKTIAIFINQLREKVGVMFGNPETTPGGRALKFYSSVRLDVRGNTQIKGTGEHKDHNVGKETKIKVVKNKVAPPFREAFVEIMYGEGISRTGELIKIASDLDIIQKAGAWYSYNGEKIGQGSENAKKYLADNPAIFDEIDHKVRVHFGMTEDDSPVQSELVEEKNEADDLVLDLDNAIEIEE.

Residue 79–86 (GPESSGKT) participates in ATP binding.

Belongs to the RecA family.

Its subcellular location is the cytoplasm. In terms of biological role, can catalyze the hydrolysis of ATP in the presence of single-stranded DNA, the ATP-dependent uptake of single-stranded DNA by duplex DNA, and the ATP-dependent hybridization of homologous single-stranded DNAs. It interacts with LexA causing its activation and leading to its autocatalytic cleavage. This chain is Protein RecA, found in Streptococcus agalactiae serotype III (strain NEM316).